The following is a 936-amino-acid chain: Phosphoenolpyruvate carboxylase (936 aa).

A disordered region spans residues 1-20 (MSSLNLSAGPEPVSERPDDA). Catalysis depends on residues H164 and K598.

Belongs to the PEPCase type 1 family. Requires Mg(2+) as cofactor.

The enzyme catalyses oxaloacetate + phosphate = phosphoenolpyruvate + hydrogencarbonate. In terms of biological role, forms oxaloacetate, a four-carbon dicarboxylic acid source for the tricarboxylic acid cycle. The chain is Phosphoenolpyruvate carboxylase (ppc) from Rhodopseudomonas palustris (strain ATCC BAA-98 / CGA009).